Consider the following 103-residue polypeptide: uncharacterized protein (103 aa).

This is an uncharacterized protein from Acanthamoeba polyphaga (Amoeba).